Consider the following 328-residue polypeptide: Phenylalanine--tRNA ligase alpha subunit (328 aa).

Glutamate 253 lines the Mg(2+) pocket.

This sequence belongs to the class-II aminoacyl-tRNA synthetase family. Phe-tRNA synthetase alpha subunit type 1 subfamily. In terms of assembly, tetramer of two alpha and two beta subunits. It depends on Mg(2+) as a cofactor.

The protein localises to the cytoplasm. The catalysed reaction is tRNA(Phe) + L-phenylalanine + ATP = L-phenylalanyl-tRNA(Phe) + AMP + diphosphate + H(+). The chain is Phenylalanine--tRNA ligase alpha subunit from Chromobacterium violaceum (strain ATCC 12472 / DSM 30191 / JCM 1249 / CCUG 213 / NBRC 12614 / NCIMB 9131 / NCTC 9757 / MK).